The sequence spans 324 residues: Biotin synthase (324 aa).

The region spanning 42–269 (NEVQISSLLN…KSYIRLAAGR (228 aa)) is the Radical SAM core domain. Positions 57, 61, and 64 each coordinate [4Fe-4S] cluster. [2Fe-2S] cluster-binding residues include Cys-101, Cys-132, Cys-192, and Arg-264.

Belongs to the radical SAM superfamily. Biotin synthase family. As to quaternary structure, homodimer. The cofactor is [4Fe-4S] cluster. It depends on [2Fe-2S] cluster as a cofactor.

It carries out the reaction (4R,5S)-dethiobiotin + (sulfur carrier)-SH + 2 reduced [2Fe-2S]-[ferredoxin] + 2 S-adenosyl-L-methionine = (sulfur carrier)-H + biotin + 2 5'-deoxyadenosine + 2 L-methionine + 2 oxidized [2Fe-2S]-[ferredoxin]. Its pathway is cofactor biosynthesis; biotin biosynthesis; biotin from 7,8-diaminononanoate: step 2/2. Catalyzes the conversion of dethiobiotin (DTB) to biotin by the insertion of a sulfur atom into dethiobiotin via a radical-based mechanism. This is Biotin synthase from Ehrlichia canis (strain Jake).